The following is a 720-amino-acid chain: Glycine--tRNA ligase beta subunit (720 aa).

Belongs to the class-II aminoacyl-tRNA synthetase family. Tetramer of two alpha and two beta subunits.

It is found in the cytoplasm. It catalyses the reaction tRNA(Gly) + glycine + ATP = glycyl-tRNA(Gly) + AMP + diphosphate. This chain is Glycine--tRNA ligase beta subunit, found in Acidovorax ebreus (strain TPSY) (Diaphorobacter sp. (strain TPSY)).